We begin with the raw amino-acid sequence, 341 residues long: UDP-3-O-(3-hydroxymyristoyl)glucosamine N-acyltransferase (341 aa).

Histidine 239 serves as the catalytic Proton acceptor.

Belongs to the transferase hexapeptide repeat family. LpxD subfamily. In terms of assembly, homotrimer.

The enzyme catalyses a UDP-3-O-[(3R)-3-hydroxyacyl]-alpha-D-glucosamine + a (3R)-hydroxyacyl-[ACP] = a UDP-2-N,3-O-bis[(3R)-3-hydroxyacyl]-alpha-D-glucosamine + holo-[ACP] + H(+). It carries out the reaction UDP-3-O-[(3R)-3-hydroxytetradecanoyl]-alpha-D-glucosamine + (3R)-hydroxytetradecanoyl-[ACP] = UDP-2-N,3-O-bis[(3R)-3-hydroxytetradecanoyl]-alpha-D-glucosamine + holo-[ACP] + H(+). It participates in glycolipid biosynthesis; lipid IV(A) biosynthesis; lipid IV(A) from (3R)-3-hydroxytetradecanoyl-[acyl-carrier-protein] and UDP-N-acetyl-alpha-D-glucosamine: step 3/6. Functionally, catalyzes the N-acylation of UDP-3-O-(hydroxytetradecanoyl)glucosamine using 3-hydroxytetradecanoyl-ACP as the acyl donor. Is involved in the biosynthesis of lipid A, a phosphorylated glycolipid that anchors the lipopolysaccharide to the outer membrane of the cell. The protein is UDP-3-O-(3-hydroxymyristoyl)glucosamine N-acyltransferase of Salmonella choleraesuis (strain SC-B67).